Here is a 295-residue protein sequence, read N- to C-terminus: Cop9 signalosome-interactor 1 (295 aa).

As to quaternary structure, component of a COP9 signalosome-like (CSN) complex, composed of RRI1/CSN5, CSN9, RRI2/CSN10, PCI8/CSN11, CSN12 and CSI1. In the complex, it probably interacts directly with CSN9 and CSN12. Interacts also with RPN5.

It localises to the cytoplasm. The protein resides in the nucleus. In terms of biological role, component of the COP9 signalosome (CSN) complex that acts as an regulator of the ubiquitin (Ubl) conjugation pathway by mediating the deneddylation of the cullin subunit of SCF-type E3 ubiquitin-protein ligase complexes The CSN complex is involved in the regulation of the mating pheromone response. This chain is Cop9 signalosome-interactor 1 (CSI1), found in Saccharomyces cerevisiae (strain ATCC 204508 / S288c) (Baker's yeast).